A 253-amino-acid polypeptide reads, in one-letter code: 1-(5-phosphoribosyl)-5-[(5-phosphoribosylamino)methylideneamino] imidazole-4-carboxamide isomerase (253 aa).

The active-site Proton acceptor is Asp-8. The active-site Proton donor is Asp-131.

The protein belongs to the HisA/HisF family.

The protein resides in the cytoplasm. The enzyme catalyses 1-(5-phospho-beta-D-ribosyl)-5-[(5-phospho-beta-D-ribosylamino)methylideneamino]imidazole-4-carboxamide = 5-[(5-phospho-1-deoxy-D-ribulos-1-ylimino)methylamino]-1-(5-phospho-beta-D-ribosyl)imidazole-4-carboxamide. The protein operates within amino-acid biosynthesis; L-histidine biosynthesis; L-histidine from 5-phospho-alpha-D-ribose 1-diphosphate: step 4/9. In Polynucleobacter asymbioticus (strain DSM 18221 / CIP 109841 / QLW-P1DMWA-1) (Polynucleobacter necessarius subsp. asymbioticus), this protein is 1-(5-phosphoribosyl)-5-[(5-phosphoribosylamino)methylideneamino] imidazole-4-carboxamide isomerase.